A 312-amino-acid polypeptide reads, in one-letter code: Tumor necrosis factor receptor type 1-associated DEATH domain protein (312 aa).

The short motif at 147–163 (LRDEELAELEDALRNLK) is the Nuclear export signal element. The disordered stretch occupies residues 170–195 (GGDGEVASAPLQPPVPSLSEVKPPPP). A Death domain is found at 179–289 (PLQPPVPSLS…ATLQRLVEAL (111 aa)). Pro residues predominate over residues 180–195 (LQPPVPSLSEVKPPPP). Residues 222-289 (FARSVGLKWR…ATLQRLVEAL (68 aa)) form an interaction with KRT14 and KRT18 region. A Nuclear localization signal motif is present at residues 231 to 244 (RKVGRSLQRGCRAL). Residues Arg-235 and Arg-245 are each glycosylated ((Microbial infection) N-beta-linked (GlcNAc) arginine).

Stimulation of TNF-alpha receptor TNFRSF1A leads to the formation of two distinct signaling complexes. Plasma membrane-bound complex I is composed of TNFRSF1A, TRADD, RIPK1, TRAF2 and BIRC2/c-IAP1 or BIRC3 which interacts with CHUCK/IKK-alpha, IKBKB/IKK-beta and IKBKG/IKK-gamma promoting cell survival. Subsequently, TRADD, RIPK1 and TRAF2 dissociate from TNFRSF1A and form cytoplasmic complex II with FADD and caspase CASP8 promoting cell apoptosis. Within complex I, interacts with TNFRSF1A/TNFR1, TRAF2 and kinase RIPK1. Within complex I, interacts with TRPC4AP; the interaction promotes NF-kappa B activation. UXT1 associates with complex I; the interaction prevents the formation of complex II. Within complex I Interacts with scaffold protein DAB2IP. Interacts with autophagy receptor SQSTM1. Interacts with E3 ligase TRIP12. Interacts with kinase HIPK2. Interacts with keratin KRT14. Interacts with keratin KRT18. Interacts with keratins KRT16 and KRT17. Interacts with FADD. Interacts with TOMM70. Interacts with TMC8; the interaction impairs the formation of complex I and facilites complex II formation. (Microbial infection) Glycosylated at Arg-235 by enteropathogenic E.coli protein NleB1, C.rodentium protein NleB and S.typhimurium proteins Ssek1 and Ssek3: arginine GlcNAcylation prevents homotypic/heterotypic death domain interactions and assembly of the oligomeric TNFRSF1A/TNFR1 complex, thereby disrupting TNF signaling. In terms of tissue distribution, found in all examined tissues.

Its subcellular location is the nucleus. It localises to the cytoplasm. The protein localises to the cytoskeleton. Adapter molecule for TNFRSF1A/TNFR1 that specifically associates with the cytoplasmic domain of activated TNFRSF1A/TNFR1 mediating its interaction with FADD. Overexpression of TRADD leads to two major TNF-induced responses, apoptosis and activation of NF-kappa-B. The nuclear form acts as a tumor suppressor by preventing ubiquitination and degradation of isoform p19ARF/ARF of CDKN2A by TRIP12: acts by interacting with TRIP12, leading to disrupt interaction between TRIP12 and isoform p19ARF/ARF of CDKN2A. The chain is Tumor necrosis factor receptor type 1-associated DEATH domain protein from Homo sapiens (Human).